Consider the following 213-residue polypeptide: Uracil phosphoribosyltransferase (213 aa).

5-phospho-alpha-D-ribose 1-diphosphate-binding positions include R78, R103, and 131-139; that span reads DPMLATGGT. Uracil-binding positions include I197 and 202–204; that span reads GDA. D203 lines the 5-phospho-alpha-D-ribose 1-diphosphate pocket.

This sequence belongs to the UPRTase family. Mg(2+) serves as cofactor.

It catalyses the reaction UMP + diphosphate = 5-phospho-alpha-D-ribose 1-diphosphate + uracil. Its pathway is pyrimidine metabolism; UMP biosynthesis via salvage pathway; UMP from uracil: step 1/1. Its activity is regulated as follows. Allosterically activated by GTP. In terms of biological role, catalyzes the conversion of uracil and 5-phospho-alpha-D-ribose 1-diphosphate (PRPP) to UMP and diphosphate. This is Uracil phosphoribosyltransferase from Bifidobacterium adolescentis (strain ATCC 15703 / DSM 20083 / NCTC 11814 / E194a).